We begin with the raw amino-acid sequence, 247 residues long: 2,3-bisphosphoglycerate-dependent phosphoglycerate mutase (247 aa).

Residues 8-15 (RHGESTWN), 21-22 (TG), arginine 60, 87-90 (ERHY), lysine 98, 114-115 (RR), and 183-184 (GN) each bind substrate. Histidine 9 (tele-phosphohistidine intermediate) is an active-site residue. Glutamate 87 (proton donor/acceptor) is an active-site residue.

The protein belongs to the phosphoglycerate mutase family. BPG-dependent PGAM subfamily. As to quaternary structure, homodimer.

It catalyses the reaction (2R)-2-phosphoglycerate = (2R)-3-phosphoglycerate. It functions in the pathway carbohydrate degradation; glycolysis; pyruvate from D-glyceraldehyde 3-phosphate: step 3/5. Its function is as follows. Catalyzes the interconversion of 2-phosphoglycerate and 3-phosphoglycerate. This is 2,3-bisphosphoglycerate-dependent phosphoglycerate mutase from Albidiferax ferrireducens (strain ATCC BAA-621 / DSM 15236 / T118) (Rhodoferax ferrireducens).